The primary structure comprises 40 residues: Photosystem II reaction center protein J (40 aa).

The helical transmembrane segment at 8–28 (IPLWLIGTVTGIIVIGLIGIF) threads the bilayer.

The protein belongs to the PsbJ family. As to quaternary structure, PSII is composed of 1 copy each of membrane proteins PsbA, PsbB, PsbC, PsbD, PsbE, PsbF, PsbH, PsbI, PsbJ, PsbK, PsbL, PsbM, PsbT, PsbX, PsbY, PsbZ, Psb30/Ycf12, at least 3 peripheral proteins of the oxygen-evolving complex and a large number of cofactors. It forms dimeric complexes.

It is found in the plastid. The protein localises to the chloroplast thylakoid membrane. In terms of biological role, one of the components of the core complex of photosystem II (PSII). PSII is a light-driven water:plastoquinone oxidoreductase that uses light energy to abstract electrons from H(2)O, generating O(2) and a proton gradient subsequently used for ATP formation. It consists of a core antenna complex that captures photons, and an electron transfer chain that converts photonic excitation into a charge separation. This Piper cenocladum (Ant piper) protein is Photosystem II reaction center protein J.